A 294-amino-acid polypeptide reads, in one-letter code: Pyridoxal 5'-phosphate synthase subunit PdxS (294 aa).

Asp-24 provides a ligand contact to D-ribose 5-phosphate. Lys-81 serves as the catalytic Schiff-base intermediate with D-ribose 5-phosphate. Gly-153 contacts D-ribose 5-phosphate. Arg-165 contributes to the D-glyceraldehyde 3-phosphate binding site. D-ribose 5-phosphate-binding positions include Gly-214 and 235–236; that span reads GS.

The protein belongs to the PdxS/SNZ family. As to quaternary structure, in the presence of PdxT, forms a dodecamer of heterodimers.

The enzyme catalyses aldehydo-D-ribose 5-phosphate + D-glyceraldehyde 3-phosphate + L-glutamine = pyridoxal 5'-phosphate + L-glutamate + phosphate + 3 H2O + H(+). The protein operates within cofactor biosynthesis; pyridoxal 5'-phosphate biosynthesis. Its function is as follows. Catalyzes the formation of pyridoxal 5'-phosphate from ribose 5-phosphate (RBP), glyceraldehyde 3-phosphate (G3P) and ammonia. The ammonia is provided by the PdxT subunit. Can also use ribulose 5-phosphate and dihydroxyacetone phosphate as substrates, resulting from enzyme-catalyzed isomerization of RBP and G3P, respectively. The polypeptide is Pyridoxal 5'-phosphate synthase subunit PdxS (Bacillus pumilus (strain SAFR-032)).